We begin with the raw amino-acid sequence, 207 residues long: Shikimate kinase (207 aa).

ATP is bound at residue 32-37 (GVGKST). S36 contacts Mg(2+). 3 residues coordinate substrate: D54, R78, and G100. Position 138 (R138) interacts with ATP. Residue R157 participates in substrate binding.

Belongs to the shikimate kinase family. In terms of assembly, monomer. Mg(2+) serves as cofactor.

It is found in the cytoplasm. The catalysed reaction is shikimate + ATP = 3-phosphoshikimate + ADP + H(+). It participates in metabolic intermediate biosynthesis; chorismate biosynthesis; chorismate from D-erythrose 4-phosphate and phosphoenolpyruvate: step 5/7. Catalyzes the specific phosphorylation of the 3-hydroxyl group of shikimic acid using ATP as a cosubstrate. The protein is Shikimate kinase of Bradyrhizobium diazoefficiens (strain JCM 10833 / BCRC 13528 / IAM 13628 / NBRC 14792 / USDA 110).